A 382-amino-acid polypeptide reads, in one-letter code: Sulfate adenylyltransferase (382 aa).

The protein belongs to the sulfate adenylyltransferase family.

It carries out the reaction sulfate + ATP + H(+) = adenosine 5'-phosphosulfate + diphosphate. It participates in sulfur metabolism; hydrogen sulfide biosynthesis; sulfite from sulfate: step 1/3. The chain is Sulfate adenylyltransferase from Ignicoccus hospitalis (strain KIN4/I / DSM 18386 / JCM 14125).